The chain runs to 211 residues: Histidine biosynthesis bifunctional protein HisIE (211 aa).

A phosphoribosyl-AMP cyclohydrolase region spans residues 1-118 (MNVDDLTFDD…IYGASDRFGI (118 aa)). The tract at residues 119-211 (IATLEALIAE…LEERHRPKEE (93 aa)) is phosphoribosyl-ATP pyrophosphohydrolase.

In the N-terminal section; belongs to the PRA-CH family. It in the C-terminal section; belongs to the PRA-PH family.

The protein localises to the cytoplasm. It catalyses the reaction 1-(5-phospho-beta-D-ribosyl)-ATP + H2O = 1-(5-phospho-beta-D-ribosyl)-5'-AMP + diphosphate + H(+). The enzyme catalyses 1-(5-phospho-beta-D-ribosyl)-5'-AMP + H2O = 1-(5-phospho-beta-D-ribosyl)-5-[(5-phospho-beta-D-ribosylamino)methylideneamino]imidazole-4-carboxamide. Its pathway is amino-acid biosynthesis; L-histidine biosynthesis; L-histidine from 5-phospho-alpha-D-ribose 1-diphosphate: step 2/9. The protein operates within amino-acid biosynthesis; L-histidine biosynthesis; L-histidine from 5-phospho-alpha-D-ribose 1-diphosphate: step 3/9. In Halalkalibacterium halodurans (strain ATCC BAA-125 / DSM 18197 / FERM 7344 / JCM 9153 / C-125) (Bacillus halodurans), this protein is Histidine biosynthesis bifunctional protein HisIE (hisI).